The sequence spans 348 residues: tRNA N6-adenosine threonylcarbamoyltransferase (348 aa).

Residues His120 and His124 each contribute to the Fe cation site. Substrate is bound by residues 143 to 147, Asp176, Gly189, and Asn282; that span reads LVSGG. A Fe cation-binding site is contributed by Asp310.

Belongs to the KAE1 / TsaD family. The cofactor is Fe(2+).

The protein resides in the cytoplasm. It carries out the reaction L-threonylcarbamoyladenylate + adenosine(37) in tRNA = N(6)-L-threonylcarbamoyladenosine(37) in tRNA + AMP + H(+). In terms of biological role, required for the formation of a threonylcarbamoyl group on adenosine at position 37 (t(6)A37) in tRNAs that read codons beginning with adenine. Is involved in the transfer of the threonylcarbamoyl moiety of threonylcarbamoyl-AMP (TC-AMP) to the N6 group of A37, together with TsaE and TsaB. TsaD likely plays a direct catalytic role in this reaction. This chain is tRNA N6-adenosine threonylcarbamoyltransferase, found in Paracidovorax citrulli (strain AAC00-1) (Acidovorax citrulli).